A 240-amino-acid chain; its full sequence is LexA repressor (240 aa).

The segment at residues 26–46 (FDEMKDALDLKSKSGIHRLIT) is a DNA-binding region (H-T-H motif). Active-site for autocatalytic cleavage activity residues include Ser-161 and Lys-199.

This sequence belongs to the peptidase S24 family. Homodimer.

The enzyme catalyses Hydrolysis of Ala-|-Gly bond in repressor LexA.. In terms of biological role, represses a number of genes involved in the response to DNA damage (SOS response), including recA and lexA. In the presence of single-stranded DNA, RecA interacts with LexA causing an autocatalytic cleavage which disrupts the DNA-binding part of LexA, leading to derepression of the SOS regulon and eventually DNA repair. The chain is LexA repressor from Methylobacterium nodulans (strain LMG 21967 / CNCM I-2342 / ORS 2060).